We begin with the raw amino-acid sequence, 189 residues long: Translation machinery-associated protein 22 (189 aa).

The SUI1 domain maps to 94 to 165; it reads VTIKRIERNK…EAKDYIEKLL (72 aa).

It belongs to the DENR family. Interacts with the 40S ribosomal subunit.

The protein resides in the cytoplasm. The sequence is that of Translation machinery-associated protein 22 (TMA22) from Debaryomyces hansenii (strain ATCC 36239 / CBS 767 / BCRC 21394 / JCM 1990 / NBRC 0083 / IGC 2968) (Yeast).